Reading from the N-terminus, the 360-residue chain is Sphingolipid delta(4)-desaturase (360 aa).

The next 3 helical transmembrane spans lie at 67-87, 89-109, and 125-145; these read AVVL…VLSF, FLAL…LCIH, and LFAI…FQPY. The Histidine box-1 motif lies at 109–113; that stretch reads HELSH. Positions 146–150 match the Histidine box-2 motif; sequence HQLHH. 3 helical membrane passes run 170-190, 202-222, and 228-248; these read VLSS…FYAL, FIHL…IKFG, and WYLI…GHFI. The Histidine box-3 signature appears at 288-292; that stretch reads HNEHH.

Belongs to the fatty acid desaturase type 1 family. DEGS subfamily.

Its subcellular location is the membrane. It catalyses the reaction an N-acylsphinganine + 2 Fe(II)-[cytochrome b5] + O2 + 2 H(+) = an N-acylsphing-4-enine + 2 Fe(III)-[cytochrome b5] + 2 H2O. Its pathway is lipid metabolism; sphingolipid metabolism. Its function is as follows. Delta(4)-fatty-acid desaturase which introduces a double bond at the 4-position in the long-chain base (LCB) of ceramides. Required for the formation of the monounsaturated sphingoid base (E)-sphing-4-enine during glucosylceramide (GluCer) biosynthesis. The sequence is that of Sphingolipid delta(4)-desaturase from Komagataella phaffii (strain GS115 / ATCC 20864) (Yeast).